Reading from the N-terminus, the 149-residue chain is Transcription antitermination protein NusB (149 aa).

Belongs to the NusB family.

Functionally, involved in transcription antitermination. Required for transcription of ribosomal RNA (rRNA) genes. Binds specifically to the boxA antiterminator sequence of the ribosomal RNA (rrn) operons. The protein is Transcription antitermination protein NusB of Acinetobacter baylyi (strain ATCC 33305 / BD413 / ADP1).